The following is a 142-amino-acid chain: Large ribosomal subunit protein uL23 (142 aa).

This sequence belongs to the universal ribosomal protein uL23 family. Component of the large ribosomal subunit. Mature ribosomes consist of a small (40S) and a large (60S) subunit. The 40S subunit contains about 32 different proteins and 1 molecule of RNA (18S). The 60S subunit contains 45 different proteins and 3 molecules of RNA (25S, 5.8S and 5S).

Its subcellular location is the cytoplasm. Functionally, component of the ribosome, a large ribonucleoprotein complex responsible for the synthesis of proteins in the cell. The small ribosomal subunit (SSU) binds messenger RNAs (mRNAs) and translates the encoded message by selecting cognate aminoacyl-transfer RNA (tRNA) molecules. The large subunit (LSU) contains the ribosomal catalytic site termed the peptidyl transferase center (PTC), which catalyzes the formation of peptide bonds, thereby polymerizing the amino acids delivered by tRNAs into a polypeptide chain. The nascent polypeptides leave the ribosome through a tunnel in the LSU and interact with protein factors that function in enzymatic processing, targeting, and the membrane insertion of nascent chains at the exit of the ribosomal tunnel. RPL25 is a major component of the universal docking site for these factors at the polypeptide exit tunnel. This Candida albicans (strain SC5314 / ATCC MYA-2876) (Yeast) protein is Large ribosomal subunit protein uL23.